A 1275-amino-acid chain; its full sequence is ATP-dependent helicase/nuclease subunit A (1275 aa).

A UvrD-like helicase ATP-binding domain is found at 4–481 (PKWTKEQLEV…IMLYKNFRSR (478 aa)). 25–32 (AAAGSGKT) contributes to the ATP binding site. Residues 531–839 (TEIHLIQKDN…RIMSIHKSKG (309 aa)) enclose the UvrD-like helicase C-terminal domain.

The protein belongs to the helicase family. AddA subfamily. As to quaternary structure, heterodimer of AddA and AddB/RexB. Mg(2+) is required as a cofactor.

The enzyme catalyses Couples ATP hydrolysis with the unwinding of duplex DNA by translocating in the 3'-5' direction.. The catalysed reaction is ATP + H2O = ADP + phosphate + H(+). In terms of biological role, the heterodimer acts as both an ATP-dependent DNA helicase and an ATP-dependent, dual-direction single-stranded exonuclease. Recognizes the chi site generating a DNA molecule suitable for the initiation of homologous recombination. The AddA nuclease domain is required for chi fragment generation; this subunit has the helicase and 3' -&gt; 5' nuclease activities. In Clostridioides difficile (strain 630) (Peptoclostridium difficile), this protein is ATP-dependent helicase/nuclease subunit A.